Consider the following 130-residue polypeptide: Small ribosomal subunit protein uS9 (130 aa).

This sequence belongs to the universal ribosomal protein uS9 family.

This is Small ribosomal subunit protein uS9 from Geotalea daltonii (strain DSM 22248 / JCM 15807 / FRC-32) (Geobacter daltonii).